A 381-amino-acid chain; its full sequence is Alkanesulfonate monooxygenase (381 aa).

The protein belongs to the SsuD family. As to quaternary structure, homotetramer.

It catalyses the reaction an alkanesulfonate + FMNH2 + O2 = an aldehyde + FMN + sulfite + H2O + 2 H(+). Functionally, catalyzes the desulfonation of aliphatic sulfonates. The protein is Alkanesulfonate monooxygenase of Escherichia coli (strain SMS-3-5 / SECEC).